The primary structure comprises 585 residues: Proline--tRNA ligase (585 aa).

It belongs to the class-II aminoacyl-tRNA synthetase family. ProS type 1 subfamily. As to quaternary structure, homodimer.

It localises to the cytoplasm. The enzyme catalyses tRNA(Pro) + L-proline + ATP = L-prolyl-tRNA(Pro) + AMP + diphosphate. In terms of biological role, catalyzes the attachment of proline to tRNA(Pro) in a two-step reaction: proline is first activated by ATP to form Pro-AMP and then transferred to the acceptor end of tRNA(Pro). As ProRS can inadvertently accommodate and process non-cognate amino acids such as alanine and cysteine, to avoid such errors it has two additional distinct editing activities against alanine. One activity is designated as 'pretransfer' editing and involves the tRNA(Pro)-independent hydrolysis of activated Ala-AMP. The other activity is designated 'posttransfer' editing and involves deacylation of mischarged Ala-tRNA(Pro). The misacylated Cys-tRNA(Pro) is not edited by ProRS. The protein is Proline--tRNA ligase of Corynebacterium diphtheriae (strain ATCC 700971 / NCTC 13129 / Biotype gravis).